We begin with the raw amino-acid sequence, 118 residues long: V-type proton ATPase subunit G 3 (118 aa).

Residues 1-12 (MASQSQGIQQLL) show a composition bias toward polar residues. Residues 1-37 (MASQSQGIQQLLQAEKRAKDKLEEAKKRKNKRLRQAK) form a disordered region. Residues 3–53 (SQSQGIQQLLQAEKRAKDKLEEAKKRKNKRLRQAKEEATADIDQYRLKREG) are a coiled coil. The span at 14–26 (AEKRAKDKLEEAK) shows a compositional bias: basic and acidic residues.

This sequence belongs to the V-ATPase G subunit family. V-ATPase is a heteromultimeric enzyme made up of two complexes: the ATP-hydrolytic V1 complex and the proton translocation V0 complex. The V1 complex consists of three catalytic AB heterodimers that form a heterohexamer, three peripheral stalks each consisting of EG heterodimers, one central rotor including subunits D and F, and the regulatory subunits C and H. The proton translocation complex V0 consists of the proton transport subunit a, a ring of proteolipid subunits c9c'', rotary subunit d, subunits e and f, and two accessory subunits.

Its function is as follows. Subunit of the V1 complex of vacuolar(H+)-ATPase (V-ATPase), a multisubunit enzyme composed of a peripheral complex (V1) that hydrolyzes ATP and a membrane integral complex (V0) that translocates protons. V-ATPase is responsible for acidifying and maintaining the pH of intracellular compartments and in some cell types, is targeted to the plasma membrane, where it is responsible for acidifying the extracellular environment. The chain is V-type proton ATPase subunit G 3 (atp6v1g3) from Xenopus tropicalis (Western clawed frog).